A 1001-amino-acid polypeptide reads, in one-letter code: E3 ubiquitin-protein ligase BRE1B (1001 aa).

Residues 1–31 (MSGLGNKRAAGDGGSGPPEKKLSREEKTTTT) are disordered. Over residues 18 to 28 (PEKKLSREEKT) the composition is skewed to basic and acidic residues. Lys-20 is modified (N6-acetyllysine). At Ser-42 the chain carries Phosphoserine. Residues 45 to 91 (EEIDLKVLQFKNKKLAERLEQRQACEDELRERIEKLEKRQATDDATL) are a coiled coil. Positions 116 to 149 (GELSSAPEAPGTQEGPTCDGTPLPEPGTSELREP) are disordered. Coiled coils occupy residues 228 to 377 (ARTR…LRSL) and 437 to 523 (LQKK…AQTS). An N6-acetyllysine mark is found at Lys-355 and Lys-517. The segment at 516-646 (GKLRAQTSGS…EKAKVEEAKR (131 aa)) is disordered. Residues 520–531 (AQTSGSTHSTPN) are compositionally biased toward polar residues. Ser-528 is modified (phosphoserine). Glycyl lysine isopeptide (Lys-Gly) (interchain with G-Cter in SUMO2) cross-links involve residues Lys-578 and Lys-579. Ser-585 carries the post-translational modification Phosphoserine. Basic and acidic residues-rich tracts occupy residues 602-619 (RGREPEARPKRELREREG) and 633-646 (RADREKAKVEEAKR). A coiled-coil region spans residues 627-946 (VASALSRADR…EEIKEYKARL (320 aa)). An RING-type zinc finger spans residues 948–987 (CPCCNTRKKDAVLTKCFHVFCFECVRGRYEARQRKCPKCN).

This sequence belongs to the BRE1 family. As to quaternary structure, component of the RNF20/40 complex (also known as BRE1 complex) probably composed of 2 copies of RNF20/BRE1A and 2 copies of RNF40/BRE1B. Interacts with UBE2E1/UBCH6. Interacts with RB1 and WAC.

Its subcellular location is the nucleus. The catalysed reaction is S-ubiquitinyl-[E2 ubiquitin-conjugating enzyme]-L-cysteine + [acceptor protein]-L-lysine = [E2 ubiquitin-conjugating enzyme]-L-cysteine + N(6)-ubiquitinyl-[acceptor protein]-L-lysine.. The protein operates within protein modification; protein ubiquitination. In terms of biological role, component of the RNF20/40 E3 ubiquitin-protein ligase complex that mediates monoubiquitination of 'Lys-120' of histone H2B (H2BK120ub1). H2BK120ub1 gives a specific tag for epigenetic transcriptional activation and is also prerequisite for histone H3 'Lys-4' and 'Lys-79' methylation (H3K4me and H3K79me, respectively). It thereby plays a central role in histone code and gene regulation. The RNF20/40 complex forms a H2B ubiquitin ligase complex in cooperation with the E2 enzyme UBE2A or UBE2B; reports about the cooperation with UBE2E1/UBCH are contradictory. Required for transcriptional activation of Hox genes. In Macaca fascicularis (Crab-eating macaque), this protein is E3 ubiquitin-protein ligase BRE1B (RNF40).